A 506-amino-acid chain; its full sequence is Maturase K (506 aa).

It belongs to the intron maturase 2 family. MatK subfamily.

The protein resides in the plastid. It localises to the chloroplast. Its function is as follows. Usually encoded in the trnK tRNA gene intron. Probably assists in splicing its own and other chloroplast group II introns. In Carica papaya (Papaya), this protein is Maturase K.